The following is a 465-amino-acid chain: MASKNYDDVLKGKYPAKEHARRVVEVIRSSQPDVSGVLYLEGQKTKMIEDNDSEEHFRQRRYFYYLTGCELPDCYLTYDIATSRSTLYIPPVDPESVIWSGLPMSALEALQKYDVDEVRYTHEVNAALTSLAEAAPSSTVYAIPNQVSDSITFLGFGAKNFDVLKPAIERARVVKSDYEIALIAKANDISGAAHLAVLKRVRHVSNERELYATFLAECISRGAPHMAYHSIVAAGRAAATLHYVKNDEPTAGKLNLLLDAACELNCYASDITRTFPISGSFTPESRAIYDTVLRMQLETLAMLKEGVRWDDVHIHAHRVAIEGLLAAGIFKKGFSVDEILESRTSVAFFPHGLGHYLGMDTHDTGGNANYQDKDSMFRYLRVRGTLPAGSVITVEPGIYFCNFIIEPYLKDEKHSKYIDAAVLDKYWDVGGVRIEDNVVITKDGYDNLTTAVKDAKEMEKIISSS.

Mn(2+) contacts are provided by aspartate 259, aspartate 270, glutamate 395, and glutamate 435.

This sequence belongs to the peptidase M24B family. Requires Mn(2+) as cofactor.

The catalysed reaction is Release of any N-terminal amino acid, including proline, that is linked to proline, even from a dipeptide or tripeptide.. In terms of biological role, catalyzes the removal of a penultimate prolyl residue from the N-termini of peptides. This Pyricularia oryzae (strain 70-15 / ATCC MYA-4617 / FGSC 8958) (Rice blast fungus) protein is Probable Xaa-Pro aminopeptidase PEPP (PEPP).